A 258-amino-acid chain; its full sequence is Acyl-[acyl-carrier-protein]--UDP-N-acetylglucosamine O-acyltransferase (258 aa).

This sequence belongs to the transferase hexapeptide repeat family. LpxA subfamily. As to quaternary structure, homotrimer.

Its subcellular location is the cytoplasm. The catalysed reaction is a (3R)-hydroxyacyl-[ACP] + UDP-N-acetyl-alpha-D-glucosamine = a UDP-3-O-[(3R)-3-hydroxyacyl]-N-acetyl-alpha-D-glucosamine + holo-[ACP]. The protein operates within glycolipid biosynthesis; lipid IV(A) biosynthesis; lipid IV(A) from (3R)-3-hydroxytetradecanoyl-[acyl-carrier-protein] and UDP-N-acetyl-alpha-D-glucosamine: step 1/6. Functionally, involved in the biosynthesis of lipid A, a phosphorylated glycolipid that anchors the lipopolysaccharide to the outer membrane of the cell. The chain is Acyl-[acyl-carrier-protein]--UDP-N-acetylglucosamine O-acyltransferase from Pseudomonas syringae pv. tomato (strain ATCC BAA-871 / DC3000).